The chain runs to 432 residues: Serine--tRNA ligase (432 aa).

Thr-230–Glu-232 is an L-serine binding site. An ATP-binding site is contributed by Arg-261–Glu-263. Glu-284 lines the L-serine pocket. Position 348 to 351 (Glu-348 to Ser-351) interacts with ATP. Residue Ser-383 coordinates L-serine.

This sequence belongs to the class-II aminoacyl-tRNA synthetase family. Type-1 seryl-tRNA synthetase subfamily. Homodimer. The tRNA molecule binds across the dimer.

The protein localises to the cytoplasm. The enzyme catalyses tRNA(Ser) + L-serine + ATP = L-seryl-tRNA(Ser) + AMP + diphosphate + H(+). It catalyses the reaction tRNA(Sec) + L-serine + ATP = L-seryl-tRNA(Sec) + AMP + diphosphate + H(+). Its pathway is aminoacyl-tRNA biosynthesis; selenocysteinyl-tRNA(Sec) biosynthesis; L-seryl-tRNA(Sec) from L-serine and tRNA(Sec): step 1/1. Its function is as follows. Catalyzes the attachment of serine to tRNA(Ser). Is also able to aminoacylate tRNA(Sec) with serine, to form the misacylated tRNA L-seryl-tRNA(Sec), which will be further converted into selenocysteinyl-tRNA(Sec). The polypeptide is Serine--tRNA ligase (Limosilactobacillus fermentum (strain NBRC 3956 / LMG 18251) (Lactobacillus fermentum)).